We begin with the raw amino-acid sequence, 416 residues long: Serine hydroxymethyltransferase (416 aa).

Residues leucine 121 and 125–127 contribute to the (6S)-5,6,7,8-tetrahydrofolate site; that span reads GHL. The residue at position 229 (lysine 229) is an N6-(pyridoxal phosphate)lysine.

The protein belongs to the SHMT family. Homodimer. Pyridoxal 5'-phosphate serves as cofactor.

It localises to the cytoplasm. The catalysed reaction is (6R)-5,10-methylene-5,6,7,8-tetrahydrofolate + glycine + H2O = (6S)-5,6,7,8-tetrahydrofolate + L-serine. The protein operates within one-carbon metabolism; tetrahydrofolate interconversion. Its pathway is amino-acid biosynthesis; glycine biosynthesis; glycine from L-serine: step 1/1. Catalyzes the reversible interconversion of serine and glycine with tetrahydrofolate (THF) serving as the one-carbon carrier. This reaction serves as the major source of one-carbon groups required for the biosynthesis of purines, thymidylate, methionine, and other important biomolecules. Also exhibits THF-independent aldolase activity toward beta-hydroxyamino acids, producing glycine and aldehydes, via a retro-aldol mechanism. The sequence is that of Serine hydroxymethyltransferase from Dechloromonas aromatica (strain RCB).